A 349-amino-acid polypeptide reads, in one-letter code: UDP-N-acetylenolpyruvoylglucosamine reductase (349 aa).

The FAD-binding PCMH-type domain maps to Phe-24–Gln-197. Arg-173 is an active-site residue. Ser-249 functions as the Proton donor in the catalytic mechanism. Residue Glu-345 is part of the active site.

It belongs to the MurB family. FAD serves as cofactor.

It is found in the cytoplasm. The catalysed reaction is UDP-N-acetyl-alpha-D-muramate + NADP(+) = UDP-N-acetyl-3-O-(1-carboxyvinyl)-alpha-D-glucosamine + NADPH + H(+). It participates in cell wall biogenesis; peptidoglycan biosynthesis. In terms of biological role, cell wall formation. This Burkholderia lata (strain ATCC 17760 / DSM 23089 / LMG 22485 / NCIMB 9086 / R18194 / 383) protein is UDP-N-acetylenolpyruvoylglucosamine reductase.